We begin with the raw amino-acid sequence, 353 residues long: Photosystem II protein D1 (353 aa).

Residue Thr-2 is modified to N-acetylthreonine. Position 2 is a phosphothreonine (Thr-2). A run of 3 helical transmembrane segments spans residues 29–46 (YIGWFGVLMIPTLLTATS), 118–133 (HFLLGVACYMGREWEL), and 142–156 (WIAVAYSAPVAAATA). His-118 contacts chlorophyll a. Tyr-126 is a binding site for pheophytin a. Residues Asp-170 and Glu-189 each coordinate [CaMn4O5] cluster. Residues 197 to 218 (FHMLGVAGVFGGSLFSAMHGSL) form a helical membrane-spanning segment. Chlorophyll a is bound at residue His-198. Residues His-215 and 264–265 (SF) each bind a quinone. His-215 is a binding site for Fe cation. His-272 contacts Fe cation. Residues 274 to 288 (FLAAWPVVGIWFTAL) form a helical membrane-spanning segment. Positions 332, 333, 342, and 344 each coordinate [CaMn4O5] cluster. The propeptide occupies 345-353 (AVEAPSING).

It belongs to the reaction center PufL/M/PsbA/D family. In terms of assembly, PSII is composed of 1 copy each of membrane proteins PsbA, PsbB, PsbC, PsbD, PsbE, PsbF, PsbH, PsbI, PsbJ, PsbK, PsbL, PsbM, PsbT, PsbX, PsbY, PsbZ, Psb30/Ycf12, at least 3 peripheral proteins of the oxygen-evolving complex and a large number of cofactors. It forms dimeric complexes. The cofactor is The D1/D2 heterodimer binds P680, chlorophylls that are the primary electron donor of PSII, and subsequent electron acceptors. It shares a non-heme iron and each subunit binds pheophytin, quinone, additional chlorophylls, carotenoids and lipids. D1 provides most of the ligands for the Mn4-Ca-O5 cluster of the oxygen-evolving complex (OEC). There is also a Cl(-1) ion associated with D1 and D2, which is required for oxygen evolution. The PSII complex binds additional chlorophylls, carotenoids and specific lipids.. Tyr-161 forms a radical intermediate that is referred to as redox-active TyrZ, YZ or Y-Z. Post-translationally, C-terminally processed by CTPA; processing is essential to allow assembly of the oxygen-evolving complex and thus photosynthetic growth.

The protein resides in the plastid. The protein localises to the chloroplast thylakoid membrane. It catalyses the reaction 2 a plastoquinone + 4 hnu + 2 H2O = 2 a plastoquinol + O2. Functionally, photosystem II (PSII) is a light-driven water:plastoquinone oxidoreductase that uses light energy to abstract electrons from H(2)O, generating O(2) and a proton gradient subsequently used for ATP formation. It consists of a core antenna complex that captures photons, and an electron transfer chain that converts photonic excitation into a charge separation. The D1/D2 (PsbA/PsbD) reaction center heterodimer binds P680, the primary electron donor of PSII as well as several subsequent electron acceptors. In Illicium oligandrum (Star anise), this protein is Photosystem II protein D1.